The chain runs to 101 residues: UPF0235 protein MMP1055 (101 aa).

Belongs to the UPF0235 family.

The chain is UPF0235 protein MMP1055 from Methanococcus maripaludis (strain DSM 14266 / JCM 13030 / NBRC 101832 / S2 / LL).